The following is a 740-amino-acid chain: Phosphoribosylformylglycinamidine synthase subunit PurL (740 aa).

H49 is a catalytic residue. Y52 and K91 together coordinate ATP. Residue E93 participates in Mg(2+) binding. Substrate is bound by residues S94–H97 and R116. The active-site Proton acceptor is H95. D117 is a Mg(2+) binding site. Substrate is bound at residue Q245. D273 serves as a coordination point for Mg(2+). Residue E317–Q319 coordinates substrate. ATP contacts are provided by D501 and G538. N539 lines the Mg(2+) pocket. Substrate is bound at residue S541.

The protein belongs to the FGAMS family. In terms of assembly, monomer. Part of the FGAM synthase complex composed of 1 PurL, 1 PurQ and 2 PurS subunits.

The protein localises to the cytoplasm. The catalysed reaction is N(2)-formyl-N(1)-(5-phospho-beta-D-ribosyl)glycinamide + L-glutamine + ATP + H2O = 2-formamido-N(1)-(5-O-phospho-beta-D-ribosyl)acetamidine + L-glutamate + ADP + phosphate + H(+). Its pathway is purine metabolism; IMP biosynthesis via de novo pathway; 5-amino-1-(5-phospho-D-ribosyl)imidazole from N(2)-formyl-N(1)-(5-phospho-D-ribosyl)glycinamide: step 1/2. In terms of biological role, part of the phosphoribosylformylglycinamidine synthase complex involved in the purines biosynthetic pathway. Catalyzes the ATP-dependent conversion of formylglycinamide ribonucleotide (FGAR) and glutamine to yield formylglycinamidine ribonucleotide (FGAM) and glutamate. The FGAM synthase complex is composed of three subunits. PurQ produces an ammonia molecule by converting glutamine to glutamate. PurL transfers the ammonia molecule to FGAR to form FGAM in an ATP-dependent manner. PurS interacts with PurQ and PurL and is thought to assist in the transfer of the ammonia molecule from PurQ to PurL. The protein is Phosphoribosylformylglycinamidine synthase subunit PurL of Sulfurovum sp. (strain NBC37-1).